The chain runs to 314 residues: RNA 2',3'-cyclic phosphodiesterase (314 aa).

H43 serves as the catalytic Proton donor. 2 short sequence motifs (HXTX) span residues 43 to 46 (HITL) and 129 to 132 (HITI). H129 (proton acceptor) is an active-site residue.

This sequence belongs to the 2H phosphoesterase superfamily. ThpR family.

The enzyme catalyses a 3'-end 2',3'-cyclophospho-ribonucleotide-RNA + H2O = a 3'-end 2'-phospho-ribonucleotide-RNA + H(+). Hydrolyzes RNA 2',3'-cyclic phosphodiester to an RNA 2'-phosphomonoester. The polypeptide is RNA 2',3'-cyclic phosphodiesterase (Geobacillus stearothermophilus (Bacillus stearothermophilus)).